We begin with the raw amino-acid sequence, 394 residues long: MAREKFDRSKPHVNVGTIGHIDHGKTTLTAAICTVLAKEGKSAATRYDQIDKAPEEKARGITINSAHVEYSSDKRHYAHVDCPGHADYIKNMITGAAQMDGAILVVSATDSVMPQTREHILLARQVGVPRMVVFLNKCDIATDEEVQELVAEEVRDLLTSYGFDGKNTPIIYGSALKALEGDPKWEAKIHDLMNAVDEWIPTPEREVDKPFLLAIEDTMTITGRGTVVTGRVERGELKVGQEIEIVGLRPIRKAVVTGIEMFKKELDSAMAGDNAGVLLRGVDRKEVERGQVLAKPGSIKPHKKFKAEIYALKKEEGGRHTGFLNGYRPQFYFRTTDVTGSISLPENTEMVLPGDNTSITVELIAPIACEKGSKFSIREGGRTVGAGSVTEVLE.

A tr-type G domain is found at 10–204; it reads KPHVNVGTIG…AVDEWIPTPE (195 aa). Residues 19 to 26 are G1; the sequence is GHIDHGKT. Position 19–26 (19–26) interacts with GTP; the sequence is GHIDHGKT. Threonine 26 lines the Mg(2+) pocket. Residues 60-64 form a G2 region; the sequence is GITIN. The interval 81 to 84 is G3; it reads DCPG. Residues 81–85 and 136–139 contribute to the GTP site; these read DCPGH and NKCD. The G4 stretch occupies residues 136 to 139; that stretch reads NKCD. The interval 174–176 is G5; that stretch reads SAL.

The protein belongs to the TRAFAC class translation factor GTPase superfamily. Classic translation factor GTPase family. EF-Tu/EF-1A subfamily. In terms of assembly, monomer.

It is found in the cytoplasm. It catalyses the reaction GTP + H2O = GDP + phosphate + H(+). In terms of biological role, GTP hydrolase that promotes the GTP-dependent binding of aminoacyl-tRNA to the A-site of ribosomes during protein biosynthesis. This Mycoplasma pneumoniae (strain ATCC 29342 / M129 / Subtype 1) (Mycoplasmoides pneumoniae) protein is Elongation factor Tu.